Here is a 314-residue protein sequence, read N- to C-terminus: 4-hydroxy-3-methylbut-2-enyl diphosphate reductase (314 aa).

Cys-12 contributes to the [4Fe-4S] cluster binding site. Residues His-41 and His-74 each contribute to the (2E)-4-hydroxy-3-methylbut-2-enyl diphosphate site. His-41 and His-74 together coordinate dimethylallyl diphosphate. Positions 41 and 74 each coordinate isopentenyl diphosphate. Cys-96 contributes to the [4Fe-4S] cluster binding site. A (2E)-4-hydroxy-3-methylbut-2-enyl diphosphate-binding site is contributed by His-124. Dimethylallyl diphosphate is bound at residue His-124. Residue His-124 participates in isopentenyl diphosphate binding. Glu-126 (proton donor) is an active-site residue. Thr-167 is a (2E)-4-hydroxy-3-methylbut-2-enyl diphosphate binding site. Cys-197 serves as a coordination point for [4Fe-4S] cluster. The (2E)-4-hydroxy-3-methylbut-2-enyl diphosphate site is built by Ser-225, Ser-226, Asn-227, and Ser-269. Residues Ser-225, Ser-226, Asn-227, and Ser-269 each coordinate dimethylallyl diphosphate. Isopentenyl diphosphate contacts are provided by Ser-225, Ser-226, Asn-227, and Ser-269.

It belongs to the IspH family. [4Fe-4S] cluster is required as a cofactor.

It carries out the reaction isopentenyl diphosphate + 2 oxidized [2Fe-2S]-[ferredoxin] + H2O = (2E)-4-hydroxy-3-methylbut-2-enyl diphosphate + 2 reduced [2Fe-2S]-[ferredoxin] + 2 H(+). The enzyme catalyses dimethylallyl diphosphate + 2 oxidized [2Fe-2S]-[ferredoxin] + H2O = (2E)-4-hydroxy-3-methylbut-2-enyl diphosphate + 2 reduced [2Fe-2S]-[ferredoxin] + 2 H(+). It functions in the pathway isoprenoid biosynthesis; dimethylallyl diphosphate biosynthesis; dimethylallyl diphosphate from (2E)-4-hydroxy-3-methylbutenyl diphosphate: step 1/1. Its pathway is isoprenoid biosynthesis; isopentenyl diphosphate biosynthesis via DXP pathway; isopentenyl diphosphate from 1-deoxy-D-xylulose 5-phosphate: step 6/6. Functionally, catalyzes the conversion of 1-hydroxy-2-methyl-2-(E)-butenyl 4-diphosphate (HMBPP) into a mixture of isopentenyl diphosphate (IPP) and dimethylallyl diphosphate (DMAPP). Acts in the terminal step of the DOXP/MEP pathway for isoprenoid precursor biosynthesis. This is 4-hydroxy-3-methylbut-2-enyl diphosphate reductase from Mannheimia succiniciproducens (strain KCTC 0769BP / MBEL55E).